The primary structure comprises 121 residues: Parathyroid hormone-related protein (121 aa).

The signal sequence occupies residues 1–14 (VGVFLLSYSVPSCG). Residues 15-24 (RSVEELGRRL) constitute a propeptide that is removed on maturation. The interval 47–58 (RFFLHHLIAEIH) is important for receptor binding. Residues 61-121 (EIRATSEVSP…PGKKKKGKPG (61 aa)) form a disordered region. Polar residues predominate over residues 66–80 (SEVSPNSKPAPNTKN). The Nuclear localization signal motif lies at 98–119 (TNKVETYKEQPLKTPGKKKKGK). A compositionally biased stretch (basic and acidic residues) spans 99 to 108 (NKVETYKEQP). Residues 112–121 (PGKKKKGKPG) are compositionally biased toward basic residues.

Belongs to the parathyroid hormone family. As to quaternary structure, PTHrP interacts with PTH1R (via N-terminal extracellular domain).

It is found in the secreted. It localises to the cytoplasm. Its subcellular location is the nucleus. Neuroendocrine peptide which is a critical regulator of cellular and organ growth, development, migration, differentiation and survival and of epithelial calcium ion transport. Acts by binding to its receptor, PTH1R, activating G protein-coupled receptor signaling. Regulates endochondral bone development and epithelial-mesenchymal interactions during the formation of the mammary glands and teeth. Required for skeletal homeostasis. Promotes mammary mesenchyme differentiation and bud outgrowth by modulating mesenchymal cell responsiveness to BMPs. Up-regulates BMPR1A expression in the mammary mesenchyme and this increases the sensitivity of these cells to BMPs and allows them to respond to BMP4 in a paracrine and/or autocrine fashion. BMP4 signaling in the mesenchyme, in turn, triggers epithelial outgrowth and augments MSX2 expression, which causes the mammary mesenchyme to inhibit hair follicle formation within the nipple sheath. This is Parathyroid hormone-related protein (PTHLH) from Ovis aries (Sheep).